A 276-amino-acid polypeptide reads, in one-letter code: Homeobox protein TOS8 (276 aa).

Residues asparagine 176–tyrosine 185 are compositionally biased toward polar residues. A disordered region spans residues asparagine 176–serine 199. Residues glutamate 189 to serine 199 show a composition bias toward basic residues. Residues alanine 194 to glycine 256 constitute a DNA-binding region (homeobox; TALE-type).

This sequence belongs to the TALE/CUP9 homeobox family.

It is found in the nucleus. This Saccharomyces cerevisiae (strain ATCC 204508 / S288c) (Baker's yeast) protein is Homeobox protein TOS8 (TOS8).